A 651-amino-acid polypeptide reads, in one-letter code: Peptide-N(4)-(N-acetyl-beta-glucosaminyl)asparagine amidase (651 aa).

The residue at position 2 (Ala-2) is an N-acetylalanine. The PUB domain maps to 30–91 (EASKLLLTYA…EGETHLIFPK (62 aa)). Positions 247, 250, 280, and 283 each coordinate Zn(2+). Catalysis depends on Cys-306, which acts as the Nucleophile. Residues His-333 and Asp-350 contribute to the active site. Positions 451 to 651 (ELGGRVSGSL…LEIIITFNDL (201 aa)) constitute a PAW domain.

This sequence belongs to the transglutaminase-like superfamily. PNGase family. Component of a complex required to couple retrotranslocation, ubiquitination and deglycosylation composed of NGLY1, SAKS1, AMFR, VCP and RAD23B. Interacts with the proteasome components RAD23B and PSMC1. Interacts with directly with VCP. Interacts with DERL1, bringing it close to the endoplasmic reticulum membrane. Interacts with SAKS1. The cofactor is Zn(2+). In terms of tissue distribution, ubiquitously expressed with highest level in testis.

The protein localises to the cytoplasm. The catalysed reaction is Hydrolysis of an N(4)-(acetyl-beta-D-glucosaminyl)asparagine residue in which the glucosamine residue may be further glycosylated, to yield a (substituted) N-acetyl-beta-D-glucosaminylamine and a peptide containing an aspartate residue.. Inhibited by Z-VAD-fmk, a well-known caspase inhibitor, which inhibits enzyme activity through covalent binding of the carbohydrate to the single Cys-306 residue. In terms of biological role, specifically deglycosylates the denatured form of N-linked glycoproteins in the cytoplasm and assists their proteasome-mediated degradation. Cleaves the beta-aspartyl-glucosamine (GlcNAc) of the glycan and the amide side chain of Asn, converting Asn to Asp. Prefers proteins containing high-mannose over those bearing complex type oligosaccharides. Can recognize misfolded proteins in the endoplasmic reticulum that are exported to the cytosol to be destroyed and deglycosylate them, while it has no activity toward native proteins. Deglycosylation is a prerequisite for subsequent proteasome-mediated degradation of some, but not all, misfolded glycoproteins. This chain is Peptide-N(4)-(N-acetyl-beta-glucosaminyl)asparagine amidase (Ngly1), found in Mus musculus (Mouse).